Consider the following 707-residue polypeptide: Polyribonucleotide nucleotidyltransferase (707 aa).

2 residues coordinate Mg(2+): aspartate 486 and aspartate 492. Residues 553–612 (PRIHIIKINPEKIKDVIGKGGSVIRMLTEETGTIIEIEDDGTVKISSTVKEKAKNAIRRI) form the KH domain. The 69-residue stretch at 622 to 690 (GRIYSGKVTR…RQGRLRLSIK (69 aa)) folds into the S1 motif domain.

It belongs to the polyribonucleotide nucleotidyltransferase family. As to quaternary structure, component of the RNA degradosome, which is a multiprotein complex involved in RNA processing and mRNA degradation. Mg(2+) serves as cofactor.

The protein resides in the cytoplasm. It catalyses the reaction RNA(n+1) + phosphate = RNA(n) + a ribonucleoside 5'-diphosphate. Functionally, involved in mRNA degradation. Catalyzes the phosphorolysis of single-stranded polyribonucleotides processively in the 3'- to 5'-direction. In Buchnera aphidicola subsp. Acyrthosiphon pisum (strain 5A), this protein is Polyribonucleotide nucleotidyltransferase.